The following is a 158-amino-acid chain: Small ribosomal subunit protein uS15 (158 aa).

A compositionally biased stretch (basic residues) spans 1 to 10 (MARMHTRRRG). The segment at 1–66 (MARMHTRRRG…EGVKGTPIPD (66 aa)) is disordered. A compositionally biased stretch (acidic residues) spans 21-32 (DPPEWSDIDADA). Positions 33 to 45 (IEERVVELAEQGH) are enriched in basic and acidic residues.

This sequence belongs to the universal ribosomal protein uS15 family. In terms of assembly, part of the 30S ribosomal subunit.

The polypeptide is Small ribosomal subunit protein uS15 (Haloquadratum walsbyi (strain DSM 16790 / HBSQ001)).